We begin with the raw amino-acid sequence, 270 residues long: Gap junction beta-3 protein (270 aa).

Over 1-20 (MDWKKLQDLLSGVNQYSTAF) the chain is Cytoplasmic. A helical transmembrane segment spans residues 21–40 (GRIWLSVVFVFRVLVYVVAA). Residues 41–75 (ERVWGDEQKDFDCNTRQPGCTNVCYDNFFPISNIR) lie on the Extracellular side of the membrane. The helical transmembrane segment at 76–98 (LWALQLIFVTCPSMLVILHVAYR) threads the bilayer. Residues 99–126 (EERERKHRQKHGEQCAKLYSHPGKKHGG) lie on the Cytoplasmic side of the membrane. Residues 127-149 (LWWTYLFSLIFKLIIELVFLYVL) traverse the membrane as a helical segment. Residues 150–188 (HTLWHGFTMPRLVQCASIVPCPNTVDCYIARPTEKKVFT) lie on the Extracellular side of the membrane. Residues 189 to 211 (YFMVGASAVCIILTICEICYLIF) traverse the membrane as a helical segment. Over 212–270 (HRIMRGISKGKSTKSISSPKSSSRASTCRCHHKLLESGDPEADPASEKLQASAPSLTPI) the chain is Cytoplasmic. Residues 246-270 (LESGDPEADPASEKLQASAPSLTPI) are disordered.

The protein belongs to the connexin family. Beta-type (group I) subfamily. As to quaternary structure, a connexon is composed of a hexamer of connexins. Interacts with CNST.

It is found in the cell membrane. The protein localises to the cell junction. Its subcellular location is the gap junction. One gap junction consists of a cluster of closely packed pairs of transmembrane channels, the connexons, through which materials of low MW diffuse from one cell to a neighboring cell. The sequence is that of Gap junction beta-3 protein (Gjb3) from Mus musculus (Mouse).